Here is a 508-residue protein sequence, read N- to C-terminus: Photosystem II CP47 reaction center protein (508 aa).

Helical transmembrane passes span 21–36, 101–115, 140–156, 203–218, 237–252, and 457–472; these read SVHI…WAGS, IVFS…IWHW, GIHL…FGAF, IAAG…FHLS, VLSS…AFVV, and SFAL…HGAR.

Belongs to the PsbB/PsbC family. PsbB subfamily. In terms of assembly, PSII is composed of 1 copy each of membrane proteins PsbA, PsbB, PsbC, PsbD, PsbE, PsbF, PsbH, PsbI, PsbJ, PsbK, PsbL, PsbM, PsbT, PsbX, PsbY, PsbZ, Psb30/Ycf12, at least 3 peripheral proteins of the oxygen-evolving complex and a large number of cofactors. It forms dimeric complexes. Binds multiple chlorophylls. PSII binds additional chlorophylls, carotenoids and specific lipids. serves as cofactor.

Its subcellular location is the plastid. The protein resides in the chloroplast thylakoid membrane. Functionally, one of the components of the core complex of photosystem II (PSII). It binds chlorophyll and helps catalyze the primary light-induced photochemical processes of PSII. PSII is a light-driven water:plastoquinone oxidoreductase, using light energy to abstract electrons from H(2)O, generating O(2) and a proton gradient subsequently used for ATP formation. The polypeptide is Photosystem II CP47 reaction center protein (Nasturtium officinale (Watercress)).